A 221-amino-acid polypeptide reads, in one-letter code: MKNVDDLIENAAELAERGLSKGEIADELNVSRETASWLVERSQPTDNSQSSSANNPTEAHDIHVDWSAVGRDSKRLTYIGQAMADLLMKEGEAVDLTIGIEKAGASLSTVVAQELDTDLGSYAPAKHQWDEGDIDELGGSFSRNFAQIRDRDCYIVDDTITSGTTMQETIDAIRDAGGRPVACVVVVDKQGVDSLADVPVYSLIDVVRVDSDTNDRDISNK.

The disordered stretch occupies residues 35–59 (ASWLVERSQPTDNSQSSSANNPTEA). Over residues 42–57 (SQPTDNSQSSSANNPT) the composition is skewed to polar residues.

This sequence belongs to the purine/pyrimidine phosphoribosyltransferase family. GfcR subfamily.

Functionally, DNA-binding transcriptional regulator that functions as a regulator of central sugar catabolic pathways. The chain is Transcriptional regulator GfcR from Haloquadratum walsbyi (strain DSM 16790 / HBSQ001).